The primary structure comprises 342 residues: N-acetyl-gamma-glutamyl-phosphate reductase (342 aa).

Cys-149 is an active-site residue.

It belongs to the NAGSA dehydrogenase family. Type 1 subfamily.

The protein resides in the cytoplasm. It catalyses the reaction N-acetyl-L-glutamate 5-semialdehyde + phosphate + NADP(+) = N-acetyl-L-glutamyl 5-phosphate + NADPH + H(+). It participates in amino-acid biosynthesis; L-arginine biosynthesis; N(2)-acetyl-L-ornithine from L-glutamate: step 3/4. Functionally, catalyzes the NADPH-dependent reduction of N-acetyl-5-glutamyl phosphate to yield N-acetyl-L-glutamate 5-semialdehyde. The protein is N-acetyl-gamma-glutamyl-phosphate reductase of Paracoccus denitrificans (strain Pd 1222).